The chain runs to 130 residues: Small ribosomal subunit protein uS9 (130 aa).

It belongs to the universal ribosomal protein uS9 family.

This is Small ribosomal subunit protein uS9 from Saccharophagus degradans (strain 2-40 / ATCC 43961 / DSM 17024).